Reading from the N-terminus, the 89-residue chain is MPYILISTQIRLETGPTMVGDEYSDPSIMNYLGARKITVLGNNFSEYHVDEPPRLVLDKLDKIGYRVVSMTGVGQTLVWCLHKESSNTL.

Belongs to the GFRP family. In terms of assembly, homopentamer. Forms a complex with GCH1 where a GCH1 homodecamer is sandwiched by two GFRP homopentamers.

The protein localises to the nucleus. Its subcellular location is the nucleus membrane. The protein resides in the cytoplasm. It localises to the cytosol. Mediates tetrahydrobiopterin inhibition of GTP cyclohydrolase 1. The sequence is that of GTP cyclohydrolase 1 feedback regulatory protein (gchfr) from Danio rerio (Zebrafish).